Consider the following 414-residue polypeptide: 2-epi-5-epi-valiolone synthase (414 aa).

NAD(+)-binding positions include D70, 101-104 (ESAK), 134-138 (GVLTD), 158-159 (TT), K171, K180, and 198-201 (FLAT). Residue K171 is part of the active site. Residues E213, H284, and H300 each coordinate Zn(2+).

The protein belongs to the sugar phosphate cyclases superfamily. EEVS family. NAD(+) is required as a cofactor. Requires Zn(2+) as cofactor.

The catalysed reaction is D-sedoheptulose 7-phosphate = 2-epi-5-epi-valiolone + phosphate. The protein operates within antibiotic biosynthesis. Functionally, catalyzes the cyclization of D-sedoheptulose 7-phosphate to 2-epi-5-epi-valiolone. Involved in validamycin biosynthesis. The chain is 2-epi-5-epi-valiolone synthase from Streptomyces hygroscopicus subsp. jinggangensis (strain 5008).